Consider the following 339-residue polypeptide: Purple acid phosphatase 4 (339 aa).

Positions 1–31 (MSSKFDIGSLSIVMTLLICFLLLSLAPKLEA) are cleaved as a signal peptide. D53 contributes to the Fe cation binding site. N61 carries an N-linked (GlcNAc...) asparagine glycan. Fe cation contacts are provided by D86 and Y89. A Zn(2+)-binding site is contributed by D86. The Zn(2+) site is built by N124 and H218. H227 serves as the catalytic Proton donor. Residue H253 coordinates Zn(2+). 253–255 (HDH) serves as a coordination point for substrate. H255 lines the Fe cation pocket. N284 is a glycosylation site (N-linked (GlcNAc...) asparagine).

This sequence belongs to the metallophosphoesterase superfamily. Purple acid phosphatase family. As to quaternary structure, homodimer. It depends on Fe cation as a cofactor. Zn(2+) serves as cofactor. In terms of tissue distribution, expressed in roots, stems, leaves, flowers and siliques.

It is found in the secreted. The catalysed reaction is a phosphate monoester + H2O = an alcohol + phosphate. The protein is Purple acid phosphatase 4 (PAP4) of Arabidopsis thaliana (Mouse-ear cress).